A 550-amino-acid polypeptide reads, in one-letter code: Chaperonin GroEL (550 aa).

Residues Thr-29–Pro-32, Lys-50, Asp-86–Thr-90, Gly-418, and Asp-499 contribute to the ATP site.

The protein belongs to the chaperonin (HSP60) family. In terms of assembly, forms a cylinder of 14 subunits composed of two heptameric rings stacked back-to-back. Interacts with the co-chaperonin GroES.

It localises to the cytoplasm. It catalyses the reaction ATP + H2O + a folded polypeptide = ADP + phosphate + an unfolded polypeptide.. Together with its co-chaperonin GroES, plays an essential role in assisting protein folding. The GroEL-GroES system forms a nano-cage that allows encapsulation of the non-native substrate proteins and provides a physical environment optimized to promote and accelerate protein folding. In Wolbachia sp. subsp. Brugia malayi (strain TRS), this protein is Chaperonin GroEL.